Consider the following 434-residue polypeptide: MKRKIIAISLFLYIPLSNADNWESITKSYYTGFAMSKTVESKDQDGKTVRKEVITQADLTTACNDAKASAQDVFNQMKLTFSGIWPDSQFRLVTGDTCVYNGSPSEKTESWSIRAQVEGDMQRSVPDEEPSEQTPEEICEAKPPIDGVFNNVSKGDEGGFYINYNGCEYEATGVTVCQNDGTVCASSAWKPTGYVPESGESSSSPVKDGDTGGTGEGGSDTGGDTGGGDTGGGSTGGDTGGSTGGGSTGGGSTGGSTGKSLTKEDVTAAIHDASPSIGDAVKDSLTEDNDQNDNQKKADEQSAKASASVSDAISDGMRGVGNFVDDLGGESSQYGIGNSEMDLSVSLAKGQLGIDLEGHGSAWESFLNDGALRPSIPSGHGCTDFVMFQGSVYQLDIGCDKLGDIKSVLSWVMYCLTFWYVFQSATSLLRKGEQ.

The first 19 residues, 1-19 (MKRKIIAISLFLYIPLSNA), serve as a signal peptide directing secretion. An N1 region spans residues 19–88 (ADNWESITKS…LTFSGIWPDS (70 aa)). Cysteines 63 and 98 form a disulfide. Residues 89–107 (QFRLVTGDTCVYNGSPSEK) are G1 (Gly-rich linker). Residues 118-137 (EGDMQRSVPDEEPSEQTPEE) form a disordered region. Over residues 127–137 (DEEPSEQTPEE) the composition is skewed to acidic residues. Residues 132-200 (EQTPEEICEA…PTGYVPESGE (69 aa)) form an N2 region. 2 disulfide bridges follow: Cys139–Cys167 and Cys177–Cys184. 2 disordered regions span residues 191-260 (PTGY…TGKS) and 272-311 (DASPSIGDAVKDSLTEDNDQNDNQKKADEQSAKASASVSD). Low complexity predominate over residues 193 to 206 (GYVPESGESSSSPV). A compositionally biased stretch (gly residues) spans 211 to 257 (TGGTGEGGSDTGGDTGGGDTGGGSTGGDTGGSTGGGSTGGGSTGGST). The tract at residues 252 to 434 (STGGSTGKSL…ATSLLRKGEQ (183 aa)) is CT. The span at 293-302 (DNQKKADEQS) shows a compositional bias: basic and acidic residues. A helical transmembrane segment spans residues 408–429 (VLSWVMYCLTFWYVFQSATSLL).

This sequence belongs to the inovirus G3P protein family. As to quaternary structure, interacts with G6P; this interaction is required for proper integration of G3P and G6P into the virion. Interacts with G8P. Interacts with the tip of the host pilus. Interacts (via N-terminus) with host TolA.

It localises to the virion. It is found in the host membrane. Its function is as follows. Plays essential roles both in the penetration of the viral genome into the bacterial host via pilus retraction and in the extrusion process. During the initial step of infection, G3P mediates adsorption of the phage to its primary receptor, the tip of host I-pilus. Attachment of the phage causes pilus retraction bringing the viral particle into close proximity of the host cell inner membrane. Subsequent interaction with the host entry receptor tolA induces penetration of the viral DNA into the host cytoplasm. In the extrusion process, G3P mediates the release of the membrane-anchored virion from the cell via its C-terminal domain. This chain is Attachment protein G3P (III), found in Escherichia coli (Bacteriophage I2-2).